The chain runs to 612 residues: MDDHKPIETPDGPAVDTPGIGARRYETPPTELPITEAEAARAAGLAHNEHLKIASGYLRGGLADGLLKHATGAISEDDGQLVKFHGMYMQDDRDIRAERTKKKLEKAYSFMIRLRIAGGVVTPKQWLILDNIATTYAGSALRATTRQTFQYHGVIKSNLKRTMAAIDSALLDTIAACGDVNRNVMAATNPAQAGAHKIALQLAKDISDTLLPKTGAWREIWLDGERVVGGEDAAEVEPVYGKTYLPRKFKTVVAVPPSNEVDIFAHDLGFIAILDKKNRVTGWNVTVGGGMGMTHGETDTFPRTADVLGFVQPEDALKAAEAVMTVQRDWGNRKNRKNARLKYTIERFGLDAFRAEVEKRIGKKLGAPKPFTFDGNGDRYGWVEGDDGRHHLTLYVPSGRIKDIEGGPQFLSGLRRIAEVHEGDFRLTGNQNVIIANVPAGKRAEIDALVDEYGLTRGASALRRNSMACVALPTCGLALAESERYLPDLLSELEESLARHGLQDEPITIRSTGCPNGCARPFISEIGLVGRGPERYHLYLGAAFDGSRLSKLYREDVTASEIKGTLDPLFAAYAKDRQPGEHFGDFVIRAGFVAKTSNGPDFHERTGPLRAA.

The segment at 1-26 (MDDHKPIETPDGPAVDTPGIGARRYE) is disordered. Residues cysteine 469, cysteine 475, cysteine 514, and cysteine 518 each coordinate [4Fe-4S] cluster. Residue cysteine 518 participates in siroheme binding.

This sequence belongs to the nitrite and sulfite reductase 4Fe-4S domain family. As to quaternary structure, alpha(8)-beta(8). The alpha component is a flavoprotein, the beta component is a hemoprotein. Siroheme is required as a cofactor. [4Fe-4S] cluster serves as cofactor.

It carries out the reaction hydrogen sulfide + 3 NADP(+) + 3 H2O = sulfite + 3 NADPH + 4 H(+). Its pathway is sulfur metabolism; hydrogen sulfide biosynthesis; hydrogen sulfide from sulfite (NADPH route): step 1/1. Functionally, component of the sulfite reductase complex that catalyzes the 6-electron reduction of sulfite to sulfide. This is one of several activities required for the biosynthesis of L-cysteine from sulfate. This Methylorubrum extorquens (strain PA1) (Methylobacterium extorquens) protein is Sulfite reductase [NADPH] hemoprotein beta-component.